Consider the following 29-residue polypeptide: Protein Tat (29 aa).

Positions 1–29 (PSSQPRGDPTGQEEPKKKVEKKTTTDPFD) are disordered. Residues 6-8 (RGD) carry the Cell attachment site motif. Basic and acidic residues predominate over residues 13–29 (EEPKKKVEKKTTTDPFD).

This sequence belongs to the lentiviruses Tat family. Interacts with host CCNT1. Associates with the P-TEFb complex composed at least of Tat, P-TEFb (CDK9 and CCNT1), TAR RNA, RNA Pol II. Recruits the HATs CREBBP, TAF1/TFIID, EP300, PCAF and GCN5L2. Interacts with host KAT5/Tip60; this interaction targets the latter to degradation. Interacts with the host deacetylase SIRT1. Interacts with host capping enzyme RNGTT; this interaction stimulates RNGTT. Binds to host KDR, and to the host integrins ITGAV/ITGB3 and ITGA5/ITGB1. Interacts with host KPNB1/importin beta-1 without previous binding to KPNA1/importin alpha-1. Interacts with EIF2AK2. Interacts with host nucleosome assembly protein NAP1L1; this interaction may be required for the transport of Tat within the nucleus, since the two proteins interact at the nuclear rim. Interacts with host C1QBP/SF2P32; this interaction involves lysine-acetylated Tat. Interacts with the host chemokine receptors CCR2, CCR3 and CXCR4. Interacts with host DPP4/CD26; this interaction may trigger an anti-proliferative effect. Interacts with host LDLR. Interacts with the host extracellular matrix metalloproteinase MMP1. Interacts with host PRMT6; this interaction mediates Tat's methylation. Interacts with, and is ubiquitinated by MDM2/Hdm2. Interacts with host PSMC3 and HTATIP2. Interacts with STAB1; this interaction may overcome SATB1-mediated repression of IL2 and IL2RA (interleukin) in T cells by binding to the same domain than HDAC1. Interacts (when acetylated) with human CDK13, thereby increasing HIV-1 mRNA splicing and promoting the production of the doubly spliced HIV-1 protein Nef. Acetylation by EP300, CREBBP, GCN5L2/GCN5 and PCAF regulates the transactivation activity of Tat. Post-translationally, phosphorylated by EIF2AK2 on serine and threonine residues adjacent to the basic region important for TAR RNA binding and function. Phosphorylation of Tat by EIF2AK2 is dependent on the prior activation of EIF2AK2 by dsRNA. In terms of processing, asymmetrical arginine methylation by host PRMT6 seems to diminish the transactivation capacity of Tat and affects the interaction with host CCNT1. Polyubiquitination by MDM2 does not target Tat to degradation, but activates its transactivation function and fosters interaction with CCNT1 and TAR RNA.

The protein resides in the host nucleus. It localises to the host nucleolus. The protein localises to the host cytoplasm. Its subcellular location is the secreted. Transcriptional activator that increases RNA Pol II processivity, thereby increasing the level of full-length viral transcripts. Recognizes a hairpin structure at the 5'-LTR of the nascent viral mRNAs referred to as the transactivation responsive RNA element (TAR) and recruits the cyclin T1-CDK9 complex (P-TEFb complex) that will in turn hyperphosphorylate the RNA polymerase II to allow efficient elongation. The CDK9 component of P-TEFb and other Tat-activated kinases hyperphosphorylate the C-terminus of RNA Pol II that becomes stabilized and much more processive. Other factors such as HTATSF1/Tat-SF1, SUPT5H/SPT5, and HTATIP2 are also important for Tat's function. Besides its effect on RNA Pol II processivity, Tat induces chromatin remodeling of proviral genes by recruiting the histone acetyltransferases (HATs) CREBBP, EP300 and PCAF to the chromatin. This also contributes to the increase in proviral transcription rate, especially when the provirus integrates in transcriptionally silent region of the host genome. To ensure maximal activation of the LTR, Tat mediates nuclear translocation of NF-kappa-B by interacting with host RELA. Through its interaction with host TBP, Tat may also modulate transcription initiation. Tat can reactivate a latently infected cell by penetrating in it and transactivating its LTR promoter. In the cytoplasm, Tat is thought to act as a translational activator of HIV-1 mRNAs. Its function is as follows. Extracellular circulating Tat can be endocytosed by surrounding uninfected cells via the binding to several surface receptors such as CD26, CXCR4, heparan sulfate proteoglycans (HSPG) or LDLR. Neurons are rarely infected, but they internalize Tat via their LDLR. Endosomal low pH allows Tat to cross the endosome membrane to enter the cytosol and eventually further translocate into the nucleus, thereby inducing severe cell dysfunctions ranging from cell activation to cell death. Through its interaction with nuclear HATs, Tat is potentially able to control the acetylation-dependent cellular gene expression. Tat seems to inhibit the HAT activity of KAT5/Tip60 and TAF1, and consequently modify the expression of specific cellular genes. Modulates the expression of many cellular genes involved in cell survival, proliferation or in coding for cytokines (such as IL10) or cytokine receptors. May be involved in the derepression of host interleukin IL2 expression. Mediates the activation of cyclin-dependent kinases and dysregulation of microtubule network. Tat plays a role in T-cell and neurons apoptosis. Tat induced neurotoxicity and apoptosis probably contribute to neuroAIDS. Host extracellular matrix metalloproteinase MMP1 cleaves Tat and decreases Tat's mediated neurotoxicity. Circulating Tat also acts as a chemokine-like and/or growth factor-like molecule that binds to specific receptors on the surface of the cells, affecting many cellular pathways. In the vascular system, Tat binds to ITGAV/ITGB3 and ITGA5/ITGB1 integrins dimers at the surface of endothelial cells and competes with bFGF for heparin-binding sites, leading to an excess of soluble bFGF. Binds to KDR/VEGFR-2. All these Tat-mediated effects enhance angiogenesis in Kaposi's sarcoma lesions. The sequence is that of Protein Tat from Homo sapiens (Human).